Reading from the N-terminus, the 662-residue chain is DNA ligase (662 aa).

NAD(+) contacts are provided by residues 32-36, 75-76, and Glu106; these read DAEYD and SL. The active-site N6-AMP-lysine intermediate is Lys108. NAD(+)-binding residues include Arg129, Glu164, Lys271, and Lys295. Zn(2+) is bound by residues Cys389, Cys392, Cys407, and Cys413. In terms of domain architecture, BRCT spans 580–662; that stretch reads SSNSVLNNKI…HKVISLGVFK (83 aa).

The protein belongs to the NAD-dependent DNA ligase family. LigA subfamily. Mg(2+) serves as cofactor. Requires Mn(2+) as cofactor.

The enzyme catalyses NAD(+) + (deoxyribonucleotide)n-3'-hydroxyl + 5'-phospho-(deoxyribonucleotide)m = (deoxyribonucleotide)n+m + AMP + beta-nicotinamide D-nucleotide.. Functionally, DNA ligase that catalyzes the formation of phosphodiester linkages between 5'-phosphoryl and 3'-hydroxyl groups in double-stranded DNA using NAD as a coenzyme and as the energy source for the reaction. It is essential for DNA replication and repair of damaged DNA. This Wolbachia pipientis wMel protein is DNA ligase.